Reading from the N-terminus, the 82-residue chain is Putative antitoxin VapB23 (82 aa).

Its function is as follows. Putative antitoxin component of a possible type II toxin-antitoxin (TA) system. The cognate toxin is VapC23. The sequence is that of Putative antitoxin VapB23 (vapB23) from Mycobacterium tuberculosis (strain ATCC 25618 / H37Rv).